A 158-amino-acid polypeptide reads, in one-letter code: 2-C-methyl-D-erythritol 2,4-cyclodiphosphate synthase (158 aa).

A divalent metal cation contacts are provided by aspartate 9 and histidine 11. 4-CDP-2-C-methyl-D-erythritol 2-phosphate-binding positions include 9–11 and 35–36; these read DVH and HS. Residue histidine 43 coordinates a divalent metal cation. 4-CDP-2-C-methyl-D-erythritol 2-phosphate-binding positions include 57-59, 62-66, 133-136, phenylalanine 140, and arginine 143; these read DIG, FPDTD, and TTTE.

This sequence belongs to the IspF family. As to quaternary structure, homotrimer. A divalent metal cation is required as a cofactor.

The catalysed reaction is 4-CDP-2-C-methyl-D-erythritol 2-phosphate = 2-C-methyl-D-erythritol 2,4-cyclic diphosphate + CMP. It participates in isoprenoid biosynthesis; isopentenyl diphosphate biosynthesis via DXP pathway; isopentenyl diphosphate from 1-deoxy-D-xylulose 5-phosphate: step 4/6. Involved in the biosynthesis of isopentenyl diphosphate (IPP) and dimethylallyl diphosphate (DMAPP), two major building blocks of isoprenoid compounds. Catalyzes the conversion of 4-diphosphocytidyl-2-C-methyl-D-erythritol 2-phosphate (CDP-ME2P) to 2-C-methyl-D-erythritol 2,4-cyclodiphosphate (ME-CPP) with a corresponding release of cytidine 5-monophosphate (CMP). This is 2-C-methyl-D-erythritol 2,4-cyclodiphosphate synthase from Haemophilus influenzae (strain PittEE).